Consider the following 137-residue polypeptide: Small ribosomal subunit protein uS12 (137 aa).

Positions 1-55 (MPTINQLVRKPRKSKTKQSDSPALNRGFNSKKKQFTNLNSPQKRGVCTRVGTMTP) are disordered. D102 is subject to 3-methylthioaspartic acid. The tract at residues 118–137 (SGVDGRRQGRSLYGTKKPKN) is disordered.

Belongs to the universal ribosomal protein uS12 family. As to quaternary structure, part of the 30S ribosomal subunit. Contacts proteins S8 and S17. May interact with IF1 in the 30S initiation complex.

Functionally, with S4 and S5 plays an important role in translational accuracy. In terms of biological role, interacts with and stabilizes bases of the 16S rRNA that are involved in tRNA selection in the A site and with the mRNA backbone. Located at the interface of the 30S and 50S subunits, it traverses the body of the 30S subunit contacting proteins on the other side and probably holding the rRNA structure together. The combined cluster of proteins S8, S12 and S17 appears to hold together the shoulder and platform of the 30S subunit. In Staphylococcus epidermidis (strain ATCC 35984 / DSM 28319 / BCRC 17069 / CCUG 31568 / BM 3577 / RP62A), this protein is Small ribosomal subunit protein uS12.